Reading from the N-terminus, the 513-residue chain is 2-isopropylmalate synthase (513 aa).

Residues Ile4–Tyr268 enclose the Pyruvate carboxyltransferase domain. The Mn(2+) site is built by Asp13, His203, His205, and Asn239. Residues Arg392–Glu513 are regulatory domain.

It belongs to the alpha-IPM synthase/homocitrate synthase family. LeuA type 1 subfamily. Homodimer. It depends on Mn(2+) as a cofactor.

The protein localises to the cytoplasm. The catalysed reaction is 3-methyl-2-oxobutanoate + acetyl-CoA + H2O = (2S)-2-isopropylmalate + CoA + H(+). It functions in the pathway amino-acid biosynthesis; L-leucine biosynthesis; L-leucine from 3-methyl-2-oxobutanoate: step 1/4. Its function is as follows. Catalyzes the condensation of the acetyl group of acetyl-CoA with 3-methyl-2-oxobutanoate (2-ketoisovalerate) to form 3-carboxy-3-hydroxy-4-methylpentanoate (2-isopropylmalate). This chain is 2-isopropylmalate synthase, found in Thermotoga neapolitana (strain ATCC 49049 / DSM 4359 / NBRC 107923 / NS-E).